A 137-amino-acid chain; its full sequence is 2-iminobutanoate/2-iminopropanoate deaminase (137 aa).

The residue at position 2 (Ser2) is an N-acetylserine. N6-succinyllysine is present on residues Lys13 and Lys67. Thr74 is subject to Phosphothreonine. Position 136 is a phosphoserine (Ser136).

It belongs to the RutC family. Homotrimer. Interacts with YTHDF2.

It is found in the cytoplasm. The protein localises to the nucleus. The protein resides in the peroxisome. Its subcellular location is the mitochondrion. The enzyme catalyses 2-iminobutanoate + H2O = 2-oxobutanoate + NH4(+). It carries out the reaction 2-iminopropanoate + H2O = pyruvate + NH4(+). Its function is as follows. Catalyzes the hydrolytic deamination of enamine/imine intermediates that form during the course of normal metabolism. May facilitate the release of ammonia from these potentially toxic reactive metabolites, reducing their impact on cellular components. It may act on enamine/imine intermediates formed by several types of pyridoxal-5'-phosphate-dependent dehydratases including L-threonine dehydratase. Also promotes endoribonucleolytic cleavage of some transcripts by promoting recruitment of the ribonuclease P/MRP complex. Acts by bridging YTHDF2 and the ribonuclease P/MRP complex. RIDA/HRSP12 binds to N6-methyladenosine (m6A)-containing mRNAs containing a 5'-GGUUC-3' motif: cooperative binding of RIDA/HRSP12 and YTHDF2 to such transcripts lead to recruitment of the ribonuclease P/MRP complex and subsequent endoribonucleolytic cleavage. The polypeptide is 2-iminobutanoate/2-iminopropanoate deaminase (Bos taurus (Bovine)).